Reading from the N-terminus, the 545-residue chain is Calcium-dependent protein kinase 10 (545 aa).

Residues 1 to 36 are disordered; it reads MGNCNACVRPDSKESKPSSKPKKPNRDRKLNPFAGD. Gly2 carries the N-myristoyl glycine lipid modification. The Protein kinase domain occupies 63-321; sequence YILGRELGRG…AQQVLAHPWI (259 aa). ATP contacts are provided by residues 69–77 and Lys92; that span reads LGRGEFGIT. Asp187 serves as the catalytic Proton acceptor. Residue Ser227 is modified to Phosphoserine. The autoinhibitory domain stretch occupies residues 327–357; sequence APNVPLGDIVRSRLKQFSMMNRFKKKVLRVI. 4 consecutive EF-hand domains span residues 364–399, 400–435, 436–471, and 472–507; these read QEVE…VGSQ, LGEP…LQKI, ENDE…ELGE, and PDAS…GTDW. 19 residues coordinate Ca(2+): Asp377, Asp379, Asp381, Lys383, Glu388, Asp413, Asp415, Asn417, Glu424, Asp449, Asp451, Ser453, Tyr455, Glu460, Asp485, Asp487, Asp489, Arg491, and Glu496.

It belongs to the protein kinase superfamily. Ser/Thr protein kinase family. CDPK subfamily.

It localises to the membrane. It catalyses the reaction L-seryl-[protein] + ATP = O-phospho-L-seryl-[protein] + ADP + H(+). It carries out the reaction L-threonyl-[protein] + ATP = O-phospho-L-threonyl-[protein] + ADP + H(+). With respect to regulation, activated by calcium. Autophosphorylation may play an important role in the regulation of the kinase activity. Functionally, may play a role in signal transduction pathways that involve calcium as a second messenger. May be a positive regulator controlling stress signal transduction. The protein is Calcium-dependent protein kinase 10 (CPK10) of Arabidopsis thaliana (Mouse-ear cress).